The chain runs to 277 residues: Energy-coupling factor transporter ATP-binding protein EcfA1 (277 aa).

In terms of domain architecture, ABC transporter spans 5 to 243 (IRAQNVSFCY…VEVLKKIGLD (239 aa)). 42–49 (GHNGSGKS) contributes to the ATP binding site.

It belongs to the ABC transporter superfamily. Energy-coupling factor EcfA family. In terms of assembly, forms a stable energy-coupling factor (ECF) transporter complex composed of 2 membrane-embedded substrate-binding proteins (S component), 2 ATP-binding proteins (A component) and 2 transmembrane proteins (T component).

It is found in the cell membrane. ATP-binding (A) component of a common energy-coupling factor (ECF) ABC-transporter complex. Unlike classic ABC transporters this ECF transporter provides the energy necessary to transport a number of different substrates. The chain is Energy-coupling factor transporter ATP-binding protein EcfA1 from Caldanaerobacter subterraneus subsp. tengcongensis (strain DSM 15242 / JCM 11007 / NBRC 100824 / MB4) (Thermoanaerobacter tengcongensis).